Here is a 334-residue protein sequence, read N- to C-terminus: Glyceraldehyde-3-phosphate dehydrogenase (334 aa).

NAD(+) is bound by residues 10 to 11 (RI), aspartate 33, lysine 77, and threonine 119. D-glyceraldehyde 3-phosphate is bound by residues 149–151 (SCT), threonine 180, 209–210 (TG), and arginine 232. Cysteine 150 (nucleophile) is an active-site residue. Residue asparagine 314 participates in NAD(+) binding.

Belongs to the glyceraldehyde-3-phosphate dehydrogenase family. In terms of assembly, homotetramer.

The protein localises to the cytoplasm. It carries out the reaction D-glyceraldehyde 3-phosphate + phosphate + NAD(+) = (2R)-3-phospho-glyceroyl phosphate + NADH + H(+). It functions in the pathway carbohydrate degradation; glycolysis; pyruvate from D-glyceraldehyde 3-phosphate: step 1/5. Catalyzes the oxidative phosphorylation of glyceraldehyde 3-phosphate (G3P) to 1,3-bisphosphoglycerate (BPG) using the cofactor NAD. The first reaction step involves the formation of a hemiacetal intermediate between G3P and a cysteine residue, and this hemiacetal intermediate is then oxidized to a thioester, with concomitant reduction of NAD to NADH. The reduced NADH is then exchanged with the second NAD, and the thioester is attacked by a nucleophilic inorganic phosphate to produce BPG. This is Glyceraldehyde-3-phosphate dehydrogenase (gap) from Chlamydia trachomatis serovar L2 (strain ATCC VR-902B / DSM 19102 / 434/Bu).